The chain runs to 436 residues: Amino acid transporter AVT3C (436 aa).

The segment covering 1-13 has biased composition (polar residues); it reads MGFQNEASSSSYT. The disordered stretch occupies residues 1–21; it reads MGFQNEASSSSYTLKIPPPAR. Topologically, residues 1 to 38 are cytoplasmic; sequence MGFQNEASSSSYTLKIPPPAREDSPLLGKGPPLSSQFK. The chain crosses the membrane as a helical span at residues 39 to 59; the sequence is TFANVFIAVVGAGVLGLPYAF. Over 60–65 the chain is Vacuolar; that stretch reads KRTGWL. Residues 66 to 86 form a helical membrane-spanning segment; it reads MGVLLLVSVSVLTHHCMMLLV. Residues 87–118 are Cytoplasmic-facing; the sequence is YTRRKLDSFNAGISKIGSFGDLGFAVCGSLGR. Residues 119–139 form a helical membrane-spanning segment; that stretch reads IVVDLFIILSQAGFCVGYLIF. The Vacuolar segment spans residues 140 to 166; the sequence is IGTTLANLSDPESPTSLRHQFTRLGSE. A helical membrane pass occupies residues 167-187; sequence FLGVSSKSLYIWGCFPFQLGL. Over 188-195 the chain is Cytoplasmic; sequence NSIKTLTH. Residues 196–216 form a helical membrane-spanning segment; the sequence is LAPLSIFADIVDLGAMAVVIV. Over 217–228 the chain is Vacuolar; sequence EDSMIILKQRPD. The chain crosses the membrane as a helical span at residues 229–249; the sequence is VVAFGGMSLFLYGMGVAVYSF. The Cytoplasmic portion of the chain corresponds to 250–273; the sequence is EGVGMVLPLESEMKDKDKFGKVLA. Residues 274–294 form a helical membrane-spanning segment; it reads LGMGFISLIYIAFGILGYLAF. The Vacuolar segment spans residues 295–309; the sequence is GEDTMDIITANLGAG. A helical membrane pass occupies residues 310-330; the sequence is LVSTVVQLGLCINLFFTFPLM. Residues 331-352 are Cytoplasmic-facing; sequence MNPVFEIVERRFSRGMYSAWLR. A helical transmembrane segment spans residues 353–373; it reads WVLVLAVTLVALFVPNFADFL. Residues 374–376 lie on the Vacuolar side of the membrane; the sequence is SLV. The helical transmembrane segment at 377-397 threads the bilayer; that stretch reads GSSTCCVLGFVLPALFHLLVF. Over 398–411 the chain is Cytoplasmic; it reads KEEMGWLQWSSDTA. A helical transmembrane segment spans residues 412 to 432; it reads IVVLGVVLAVSGTWSSLSEIF. Residues 433–436 are Vacuolar-facing; sequence SVKV.

This sequence belongs to the amino acid/polyamine transporter 2 family. Amino acid/auxin permease (AAAP) (TC 2.A.18.8) subfamily. In terms of tissue distribution, ubiquitous.

The protein resides in the vacuole membrane. Translocates preferentially neutral amino acids from the vacuole to the cytoplasm. The chain is Amino acid transporter AVT3C from Arabidopsis thaliana (Mouse-ear cress).